The chain runs to 592 residues: Inactive heparanase-2 (592 aa).

Positions 1–38 (MRVLCAFPEAMASSSSRPPSCLALVALFLALLLHLSLS) are cleaved as a signal peptide. N-linked (GlcNAc...) asparagine glycosylation is found at asparagine 254 and asparagine 392.

The protein belongs to the glycosyl hydrolase 79 family. As to quaternary structure, interacts with HPSE. Interacts with SDC1 (via glycan chains).

Its subcellular location is the secreted. It is found in the extracellular space. It localises to the extracellular matrix. Its function is as follows. Binds heparin and heparan sulfate with high affinity, but lacks heparanase activity. Inhibits HPSE, possibly by competing for its substrates (in vitro). The sequence is that of Inactive heparanase-2 (Hpse2) from Mus musculus (Mouse).